We begin with the raw amino-acid sequence, 404 residues long: Probable tRNA sulfurtransferase (404 aa).

Residues Arg60–Asp165 form the THUMP domain. ATP contacts are provided by residues Met183–Leu184, His208–Phe209, Arg265, Gly287, and Gln296.

It belongs to the ThiI family.

The protein resides in the cytoplasm. The enzyme catalyses [ThiI sulfur-carrier protein]-S-sulfanyl-L-cysteine + a uridine in tRNA + 2 reduced [2Fe-2S]-[ferredoxin] + ATP + H(+) = [ThiI sulfur-carrier protein]-L-cysteine + a 4-thiouridine in tRNA + 2 oxidized [2Fe-2S]-[ferredoxin] + AMP + diphosphate. It carries out the reaction [ThiS sulfur-carrier protein]-C-terminal Gly-Gly-AMP + S-sulfanyl-L-cysteinyl-[cysteine desulfurase] + AH2 = [ThiS sulfur-carrier protein]-C-terminal-Gly-aminoethanethioate + L-cysteinyl-[cysteine desulfurase] + A + AMP + 2 H(+). It participates in cofactor biosynthesis; thiamine diphosphate biosynthesis. Functionally, catalyzes the ATP-dependent transfer of a sulfur to tRNA to produce 4-thiouridine in position 8 of tRNAs, which functions as a near-UV photosensor. Also catalyzes the transfer of sulfur to the sulfur carrier protein ThiS, forming ThiS-thiocarboxylate. This is a step in the synthesis of thiazole, in the thiamine biosynthesis pathway. The sulfur is donated as persulfide by IscS. In Streptococcus equi subsp. zooepidemicus (strain H70), this protein is Probable tRNA sulfurtransferase.